A 361-amino-acid chain; its full sequence is Tetraacyldisaccharide 4'-kinase (361 aa).

Residue 49-56 coordinates ATP; the sequence is TTGGTGKT.

The protein belongs to the LpxK family.

The catalysed reaction is a lipid A disaccharide + ATP = a lipid IVA + ADP + H(+). It participates in glycolipid biosynthesis; lipid IV(A) biosynthesis; lipid IV(A) from (3R)-3-hydroxytetradecanoyl-[acyl-carrier-protein] and UDP-N-acetyl-alpha-D-glucosamine: step 6/6. Its function is as follows. Transfers the gamma-phosphate of ATP to the 4'-position of a tetraacyldisaccharide 1-phosphate intermediate (termed DS-1-P) to form tetraacyldisaccharide 1,4'-bis-phosphate (lipid IVA). The polypeptide is Tetraacyldisaccharide 4'-kinase (Chlorobaculum parvum (strain DSM 263 / NCIMB 8327) (Chlorobium vibrioforme subsp. thiosulfatophilum)).